Here is a 301-residue protein sequence, read N- to C-terminus: Probable alpha-L-glutamate ligase 1 (301 aa).

One can recognise an ATP-grasp domain in the interval 104–287 (LQLLSRKGIG…VTEPIVEYIE (184 aa)). ATP is bound by residues Lys-141, 178-179 (EY), Asp-187, and 211-213 (RSN). The Mg(2+) site is built by Asp-248, Glu-260, and Asn-262. Asp-248, Glu-260, and Asn-262 together coordinate Mn(2+).

This sequence belongs to the RimK family. Mg(2+) is required as a cofactor. The cofactor is Mn(2+).

This is Probable alpha-L-glutamate ligase 1 from Shewanella baltica (strain OS155 / ATCC BAA-1091).